A 247-amino-acid polypeptide reads, in one-letter code: UPF0612 protein P20C8.01c (247 aa).

2 coiled-coil regions span residues 27-63 (IKRY…MKYE) and 138-225 (DTVQ…DARS).

Belongs to the UPF0612 family.

It is found in the cytoplasm. This chain is UPF0612 protein P20C8.01c, found in Schizosaccharomyces pombe (strain 972 / ATCC 24843) (Fission yeast).